The following is a 499-amino-acid chain: Pyruvate kinase (499 aa).

R50 is a substrate binding site. K(+)-binding residues include N52, S54, D84, and T85. N52–H55 provides a ligand contact to ATP. R91 is an ATP binding site. E241 provides a ligand contact to Mg(2+). Positions 264, 265, and 297 each coordinate substrate. A Mg(2+)-binding site is contributed by D265.

Belongs to the pyruvate kinase family. Homotetramer. It depends on Mg(2+) as a cofactor. K(+) is required as a cofactor.

The catalysed reaction is pyruvate + ATP = phosphoenolpyruvate + ADP + H(+). It functions in the pathway carbohydrate degradation; glycolysis; pyruvate from D-glyceraldehyde 3-phosphate: step 5/5. Its activity is regulated as follows. Activated by fructose 2,6-bisphosphate, activated by the effector in a non cooperative manner. The polypeptide is Pyruvate kinase (PYK) (Leishmania mexicana).